Here is a 92-residue protein sequence, read N- to C-terminus: Probable Fe(2+)-trafficking protein (92 aa).

It belongs to the Fe(2+)-trafficking protein family.

In terms of biological role, could be a mediator in iron transactions between iron acquisition and iron-requiring processes, such as synthesis and/or repair of Fe-S clusters in biosynthetic enzymes. In Shewanella sp. (strain W3-18-1), this protein is Probable Fe(2+)-trafficking protein.